A 331-amino-acid chain; its full sequence is MTLLEKIKQNKSLSKKDMQSFIVTLFDSNIETNVKVELLKAYTNKDMGQYELTYLVEYFIQTNYPNQPFYNKAMCVCGTGGDQSNSFNISTTVAFVVASAGVPVIKHGNKSITSHSGSTDVLHEMNIKTNKMNEVEQQLNLKGLAFISATDSYPMMKKLQSIRKSIATPTIFNLIGPLINPFKLTYQVMGVYEASQLENIAQTLKDLGRKRAILIHGANGMDEATLSGENIIYEVSSERALKKYSLKAEEVGLAYANNDTLIGGSPQTNKQIALNILSGTDHSSKRDVVLLNAGIALYVAEQVESIKHGVERAKYLIDTGMAMKQYLKMGG.

5-phospho-alpha-D-ribose 1-diphosphate contacts are provided by residues Gly78, 81 to 82 (GD), Ser86, 88 to 91 (NIST), 106 to 114 (KHGNKSITS), and Ser118. An anthranilate-binding site is contributed by Gly78. Residue Ser90 coordinates Mg(2+). Asn109 provides a ligand contact to anthranilate. An anthranilate-binding site is contributed by Arg163. Mg(2+) contacts are provided by Asp222 and Glu223.

Belongs to the anthranilate phosphoribosyltransferase family. In terms of assembly, homodimer. The cofactor is Mg(2+).

The catalysed reaction is N-(5-phospho-beta-D-ribosyl)anthranilate + diphosphate = 5-phospho-alpha-D-ribose 1-diphosphate + anthranilate. The protein operates within amino-acid biosynthesis; L-tryptophan biosynthesis; L-tryptophan from chorismate: step 2/5. Its function is as follows. Catalyzes the transfer of the phosphoribosyl group of 5-phosphorylribose-1-pyrophosphate (PRPP) to anthranilate to yield N-(5'-phosphoribosyl)-anthranilate (PRA). The polypeptide is Anthranilate phosphoribosyltransferase (Staphylococcus epidermidis (strain ATCC 35984 / DSM 28319 / BCRC 17069 / CCUG 31568 / BM 3577 / RP62A)).